The chain runs to 805 residues: Polyribonucleotide nucleotidyltransferase (805 aa).

D491 and D497 together coordinate Mg(2+). A KH domain is found at P558–I617. One can recognise an S1 motif domain in the interval G627–R694. A disordered region spans residues D702–F805.

Belongs to the polyribonucleotide nucleotidyltransferase family. Mg(2+) serves as cofactor.

Its subcellular location is the cytoplasm. It catalyses the reaction RNA(n+1) + phosphate = RNA(n) + a ribonucleoside 5'-diphosphate. In terms of biological role, involved in mRNA degradation. Catalyzes the phosphorolysis of single-stranded polyribonucleotides processively in the 3'- to 5'-direction. The sequence is that of Polyribonucleotide nucleotidyltransferase from Anaplasma marginale (strain Florida).